A 540-amino-acid chain; its full sequence is Acyl-CoA synthetase 7 (540 aa).

ATP contacts are provided by residues Ser186–Lys194, Asp415, Arg430, and Lys522. The Microbody targeting signal motif lies at Ala538 to Leu540.

The protein belongs to the ATP-dependent AMP-binding enzyme family. Expressed in intestine.

It is found in the peroxisome. It catalyses the reaction nonanoate + ATP + CoA = nonanoyl-CoA + AMP + diphosphate. The enzyme catalyses IC-asc-C7 + ATP + CoA = IC-asc-C7-CoA + AMP + diphosphate. It carries out the reaction IC-asc-C9 + ATP + CoA = IC-asc-C9-CoA + AMP + diphosphate. Its function is as follows. Plays a role in ascaroside pheromones biosynthesis, which regulates development and behavior. Specifically, activates the side chain of medium-chain indol-3-carbonyl (IC)-ascarosides for shortening through beta-oxidation. Converts IC-asc-C7 and IC-asc-C9 into IC-asc-C7-CoA and IC-asc-C9-CoA, respectively. May play a role in fatty-acid metabolism by activating and converting nonanoate (C9) into nonanoyl-CoA (C9-CoA). In Caenorhabditis elegans, this protein is Acyl-CoA synthetase 7.